Reading from the N-terminus, the 554-residue chain is Aspartyl/glutamyl-tRNA(Asn/Gln) amidotransferase subunit B (554 aa).

The tract at residues 491-554 (AEQPTAPPPE…TPVSHQDAHA (64 aa)) is disordered. Residues 502–540 (ESAAETPEAPPAVEDAPPEAPTEAITAEAGSAEAITAAS) show a composition bias toward low complexity.

It belongs to the GatB/GatE family. GatB subfamily. Heterotrimer of A, B and C subunits.

It catalyses the reaction L-glutamyl-tRNA(Gln) + L-glutamine + ATP + H2O = L-glutaminyl-tRNA(Gln) + L-glutamate + ADP + phosphate + H(+). It carries out the reaction L-aspartyl-tRNA(Asn) + L-glutamine + ATP + H2O = L-asparaginyl-tRNA(Asn) + L-glutamate + ADP + phosphate + 2 H(+). Functionally, allows the formation of correctly charged Asn-tRNA(Asn) or Gln-tRNA(Gln) through the transamidation of misacylated Asp-tRNA(Asn) or Glu-tRNA(Gln) in organisms which lack either or both of asparaginyl-tRNA or glutaminyl-tRNA synthetases. The reaction takes place in the presence of glutamine and ATP through an activated phospho-Asp-tRNA(Asn) or phospho-Glu-tRNA(Gln). The polypeptide is Aspartyl/glutamyl-tRNA(Asn/Gln) amidotransferase subunit B (Gloeobacter violaceus (strain ATCC 29082 / PCC 7421)).